Consider the following 195-residue polypeptide: 3-isopropylmalate dehydratase small subunit (195 aa).

This sequence belongs to the LeuD family. LeuD type 1 subfamily. Heterodimer of LeuC and LeuD.

It carries out the reaction (2R,3S)-3-isopropylmalate = (2S)-2-isopropylmalate. Its pathway is amino-acid biosynthesis; L-leucine biosynthesis; L-leucine from 3-methyl-2-oxobutanoate: step 2/4. Functionally, catalyzes the isomerization between 2-isopropylmalate and 3-isopropylmalate, via the formation of 2-isopropylmaleate. In Salinispora arenicola (strain CNS-205), this protein is 3-isopropylmalate dehydratase small subunit.